Reading from the N-terminus, the 262-residue chain is Small ribosomal subunit protein mS23 (262 aa).

Residues 211–262 form a disordered region; sequence SGQSDEAPEGEGSDMSAGEYDMAVEELAGQGSIPNTPQSTVVPEGTSAPAHA. Residues 242–251 show a composition bias toward polar residues; that stretch reads SIPNTPQSTV.

The protein belongs to the mitochondrion-specific ribosomal protein mS23 family. As to quaternary structure, component of the mitochondrial small ribosomal subunit.

The protein localises to the mitochondrion. In Phaeosphaeria nodorum (strain SN15 / ATCC MYA-4574 / FGSC 10173) (Glume blotch fungus), this protein is Small ribosomal subunit protein mS23 (RSM25).